A 160-amino-acid polypeptide reads, in one-letter code: Endoribonuclease YbeY (160 aa).

The Zn(2+) site is built by histidine 125, histidine 129, and histidine 135.

The protein belongs to the endoribonuclease YbeY family. Zn(2+) serves as cofactor.

The protein localises to the cytoplasm. In terms of biological role, single strand-specific metallo-endoribonuclease involved in late-stage 70S ribosome quality control and in maturation of the 3' terminus of the 16S rRNA. The sequence is that of Endoribonuclease YbeY from Leuconostoc mesenteroides subsp. mesenteroides (strain ATCC 8293 / DSM 20343 / BCRC 11652 / CCM 1803 / JCM 6124 / NCDO 523 / NBRC 100496 / NCIMB 8023 / NCTC 12954 / NRRL B-1118 / 37Y).